Consider the following 260-residue polypeptide: Movement protein (260 aa).

Residues 230 to 260 form a disordered region; that stretch reads SGDTAEEAGEASSGEPHWVPEATAPRVRKAT.

Functionally, transports viral genome to neighboring plant cells directly through plasmosdesmata, without any budding. The movement protein allows efficient cell to cell propagation, by bypassing the host cell wall barrier. Might act by forming tubules structures that increase the size exclusion limit (SEL) of plasmodesmata, thereby allowing viral ribonucleoproteins to spread directly to neighboring cells. Binds to ssRNA. The polypeptide is Movement protein (Groundnut rosette virus (strain MC1) (GRV)).